Consider the following 321-residue polypeptide: Probable arabinan endo-1,5-alpha-L-arabinosidase A (321 aa).

A signal peptide spans 1–19; that stretch reads MSASVFVVVASCLAALAHG. Residue D34 is the Proton acceptor of the active site. The active-site Proton donor is the E200.

It belongs to the glycosyl hydrolase 43 family.

The protein localises to the secreted. The enzyme catalyses Endohydrolysis of (1-&gt;5)-alpha-arabinofuranosidic linkages in (1-&gt;5)-arabinans.. It participates in glycan metabolism; L-arabinan degradation. In terms of biological role, endo-1,5-alpha-L-arabinanase involved in degradation of pectin. Its preferred substrate is linear 1,5-alpha-L-arabinan. This is Probable arabinan endo-1,5-alpha-L-arabinosidase A (abnA) from Aspergillus fumigatus (strain ATCC MYA-4609 / CBS 101355 / FGSC A1100 / Af293) (Neosartorya fumigata).